Here is a 68-residue protein sequence, read N- to C-terminus: Cx9C motif-containing protein 4 (68 aa).

One can recognise a CHCH domain in the interval 4–46; that stretch reads KDPCQKQACEIQKCLQANSYMESKCQAVIQELRKCCAQYPKGR. 2 short sequence motifs (cx9C motif) span residues 7–17 and 28–38; these read CQKQACEIQKC and CQAVIQELRKC. 3 cysteine pairs are disulfide-bonded: Cys7–Cys38, Cys17–Cys28, and Cys39–Cys50.

The protein belongs to the CMC4 family. As to expression, expressed in many tissues with a relatively high level in skeletal muscle.

Its subcellular location is the mitochondrion. The sequence is that of Cx9C motif-containing protein 4 (CMC4) from Homo sapiens (Human).